A 512-amino-acid chain; its full sequence is Spermatocyte protein spe-8 (512 aa).

The tract at residues 1–85 (MRSKSSEGDL…PKPSSDNNNS (85 aa)) is disordered. The span at 15–41 (TQSREDKETTATYSEDTKPETQKERNA) shows a compositional bias: basic and acidic residues. Residues 68-78 (EAPPPPPPPKP) are compositionally biased toward pro residues. The SH2 domain occupies 114-205 (FYHGFMGRNE…YEGMTLICGL (92 aa)). The 269-residue stretch at 217–485 (VTLNKKLGEG…KEEVGFHEIE (269 aa)) folds into the Protein kinase domain. ATP is bound by residues 223 to 231 (LGEGQFGEV) and K250. The active-site Proton acceptor is D344.

Belongs to the protein kinase superfamily. Tyr protein kinase family. Fes/fps subfamily. As to expression, expression is restricted to male germline.

The protein resides in the cell membrane. The protein localises to the cytoplasm. It catalyses the reaction L-tyrosyl-[protein] + ATP = O-phospho-L-tyrosyl-[protein] + ADP + H(+). Probable non-receptor tyrosine-protein kinase which plays a role in spermatid activation (spermiogenesis) in hermaphrodites. This is Spermatocyte protein spe-8 from Caenorhabditis elegans.